The sequence spans 259 residues: Imidazole glycerol phosphate synthase subunit HisF (259 aa).

Active-site residues include Asp-11 and Asp-130.

This sequence belongs to the HisA/HisF family. Heterodimer of HisH and HisF.

The protein localises to the cytoplasm. It catalyses the reaction 5-[(5-phospho-1-deoxy-D-ribulos-1-ylimino)methylamino]-1-(5-phospho-beta-D-ribosyl)imidazole-4-carboxamide + L-glutamine = D-erythro-1-(imidazol-4-yl)glycerol 3-phosphate + 5-amino-1-(5-phospho-beta-D-ribosyl)imidazole-4-carboxamide + L-glutamate + H(+). It functions in the pathway amino-acid biosynthesis; L-histidine biosynthesis; L-histidine from 5-phospho-alpha-D-ribose 1-diphosphate: step 5/9. IGPS catalyzes the conversion of PRFAR and glutamine to IGP, AICAR and glutamate. The HisF subunit catalyzes the cyclization activity that produces IGP and AICAR from PRFAR using the ammonia provided by the HisH subunit. The polypeptide is Imidazole glycerol phosphate synthase subunit HisF (Variovorax paradoxus (strain S110)).